Consider the following 225-residue polypeptide: Phosphatidylserine decarboxylase proenzyme (225 aa).

The active-site Schiff-base intermediate with substrate; via pyruvic acid is the Ser195. Ser195 is subject to Pyruvic acid (Ser); by autocatalysis.

The protein belongs to the phosphatidylserine decarboxylase family. PSD-A subfamily. As to quaternary structure, heterodimer of a large membrane-associated beta subunit and a small pyruvoyl-containing alpha subunit. It depends on pyruvate as a cofactor. In terms of processing, is synthesized initially as an inactive proenzyme. Formation of the active enzyme involves a self-maturation process in which the active site pyruvoyl group is generated from an internal serine residue via an autocatalytic post-translational modification. Two non-identical subunits are generated from the proenzyme in this reaction, and the pyruvate is formed at the N-terminus of the alpha chain, which is derived from the carboxyl end of the proenzyme. The post-translation cleavage follows an unusual pathway, termed non-hydrolytic serinolysis, in which the side chain hydroxyl group of the serine supplies its oxygen atom to form the C-terminus of the beta chain, while the remainder of the serine residue undergoes an oxidative deamination to produce ammonia and the pyruvoyl prosthetic group on the alpha chain.

It is found in the cell membrane. It catalyses the reaction a 1,2-diacyl-sn-glycero-3-phospho-L-serine + H(+) = a 1,2-diacyl-sn-glycero-3-phosphoethanolamine + CO2. It functions in the pathway phospholipid metabolism; phosphatidylethanolamine biosynthesis; phosphatidylethanolamine from CDP-diacylglycerol: step 2/2. Functionally, catalyzes the formation of phosphatidylethanolamine (PtdEtn) from phosphatidylserine (PtdSer). This Gluconobacter oxydans (strain 621H) (Gluconobacter suboxydans) protein is Phosphatidylserine decarboxylase proenzyme.